The sequence spans 176 residues: Small ribosomal subunit protein uS5 (176 aa).

In terms of domain architecture, S5 DRBM spans 11–74 (LSEVLVDVNR…QAAKKRMMKV (64 aa)).

This sequence belongs to the universal ribosomal protein uS5 family. As to quaternary structure, part of the 30S ribosomal subunit. Contacts proteins S4 and S8.

Its function is as follows. With S4 and S12 plays an important role in translational accuracy. In terms of biological role, located at the back of the 30S subunit body where it stabilizes the conformation of the head with respect to the body. The polypeptide is Small ribosomal subunit protein uS5 (Rickettsia africae (strain ESF-5)).